The chain runs to 233 residues: Gamma-glutamyl-hercynylcysteine sulfoxide hydrolase (233 aa).

The active-site Nucleophile is the cysteine 2. A Glutamine amidotransferase type-2 domain is found at 2-233; that stretch reads CRHLGWLGAQ…TALDRAKGPR (232 aa).

It carries out the reaction gamma-L-glutamyl-hercynylcysteine S-oxide + H2O = S-(hercyn-2-yl)-L-cysteine S-oxide + L-glutamate. Its pathway is amino-acid biosynthesis; ergothioneine biosynthesis. In terms of biological role, catalyzes the hydrolysis of the gamma-glutamyl amide bond of hercynyl-gamma-L-glutamyl-L-cysteine sulfoxide to produce hercynylcysteine sulfoxide, a step in the biosynthesis pathway of ergothioneine. ERG is one of the major redox buffers which protects bacteria against redox stressors and antibiotics; loss of ERG or mycothiol (MSH, the other major redox buffer in this bacteria) leads to respiratory alterations and bioenergetic deficiencies that negatively impact virulence. The sequence is that of Gamma-glutamyl-hercynylcysteine sulfoxide hydrolase from Mycobacterium tuberculosis (strain CDC 1551 / Oshkosh).